We begin with the raw amino-acid sequence, 543 residues long: Probable protein kinase UbiB (543 aa).

The Protein kinase domain occupies 123 to 501 (DFDIVPLASA…KRQQAKGQFL (379 aa)). Residues 129–137 (LASASIAQV) and Lys-152 each bind ATP. Asp-287 (proton acceptor) is an active-site residue. The chain crosses the membrane as a helical span at residues 517 to 539 (TSNITALASISAATGVTFWLLSW).

This sequence belongs to the ABC1 family. UbiB subfamily.

Its subcellular location is the cell inner membrane. Its pathway is cofactor biosynthesis; ubiquinone biosynthesis [regulation]. Functionally, is probably a protein kinase regulator of UbiI activity which is involved in aerobic coenzyme Q (ubiquinone) biosynthesis. The polypeptide is Probable protein kinase UbiB (Aliivibrio salmonicida (strain LFI1238) (Vibrio salmonicida (strain LFI1238))).